Reading from the N-terminus, the 940-residue chain is AP-2 complex subunit alpha (940 aa).

2 positions are modified to phosphoserine: S632 and S634. The span at 651-662 (SHSKLNNSNANT) shows a compositional bias: polar residues. Positions 651–679 (SHSKLNNSNANTDLLGLSTPPSNNIGSGS) are disordered. The span at 668–679 (STPPSNNIGSGS) shows a compositional bias: low complexity.

It belongs to the adaptor complexes large subunit family. In terms of assembly, adaptor protein complex 2 (AP-2) is a heterotetramer composed of two large adaptins (alpha-type and beta-type subunits), a medium adaptin (mu-type subunit AP50) and a small adaptin (sigma-type subunit AP17). In terms of tissue distribution, expressed in the Garland cells, imaginal disks, adult midgut precursors, the antenno-maxillary complex, the endoderm, the fat bodies, and the visceral mesoderm and cells of the CNS and PNS including neuroblasts, the presumptive stomatogastric nervous system, and the lateral chordotonal sense organs.

It is found in the cell membrane. The protein resides in the membrane. Its subcellular location is the coated pit. Its function is as follows. Adaptins are components of the adapter complexes which link clathrin to receptors in coated vesicles. Clathrin-associated protein complexes are believed to interact with the cytoplasmic tails of membrane proteins, leading to their selection and concentration. AP-2alpha is a subunit of the plasma membrane adapter. The polypeptide is AP-2 complex subunit alpha (AP-2alpha) (Drosophila melanogaster (Fruit fly)).